The following is a 143-amino-acid chain: Putative pre-16S rRNA nuclease (143 aa).

The protein belongs to the YqgF nuclease family.

It is found in the cytoplasm. Functionally, could be a nuclease involved in processing of the 5'-end of pre-16S rRNA. The protein is Putative pre-16S rRNA nuclease of Lactococcus lactis subsp. cremoris (strain MG1363).